The following is a 115-amino-acid chain: Nitrogen regulatory protein P-II 1 (115 aa).

An O-UMP-tyrosine modification is found at Tyr54.

It belongs to the P(II) protein family.

Could be involved in the regulation of nitrogen fixation. In Methanothermobacter thermautotrophicus (strain ATCC 29096 / DSM 1053 / JCM 10044 / NBRC 100330 / Delta H) (Methanobacterium thermoautotrophicum), this protein is Nitrogen regulatory protein P-II 1.